The following is a 394-amino-acid chain: Acetate kinase (394 aa).

Residue asparagine 8 coordinates Mg(2+). Lysine 15 is an ATP binding site. Arginine 86 contacts substrate. Residue aspartate 143 is the Proton donor/acceptor of the active site. ATP contacts are provided by residues 201 to 205 (HLGNG), 276 to 278 (DCR), and 324 to 328 (GIGEN). Residue glutamate 378 coordinates Mg(2+).

The protein belongs to the acetokinase family. In terms of assembly, homodimer. Mg(2+) is required as a cofactor. The cofactor is Mn(2+).

Its subcellular location is the cytoplasm. It catalyses the reaction acetate + ATP = acetyl phosphate + ADP. It participates in metabolic intermediate biosynthesis; acetyl-CoA biosynthesis; acetyl-CoA from acetate: step 1/2. Its function is as follows. Catalyzes the formation of acetyl phosphate from acetate and ATP. Can also catalyze the reverse reaction. The chain is Acetate kinase from Dichelobacter nodosus (strain VCS1703A).